A 741-amino-acid chain; its full sequence is Methionine--tRNA ligase (741 aa).

Residues 1–22 show a composition bias toward polar residues; that stretch reads MTMKQYTMSKMNAETQTQTRES. The segment at 1-25 is disordered; the sequence is MTMKQYTMSKMNAETQTQTRESFPT. Positions 36–46 match the 'HIGH' region motif; it reads PYANGDLHIGH. The Zn(2+) site is built by Cys-167, Cys-170, Cys-179, and Cys-183. Residues 309–329 form a disordered region; it reads VRSHSSSSAKDSSEGNSPSNI. Over residues 311-329 the composition is skewed to low complexity; it reads SHSSSSAKDSSEGNSPSNI. Thr-381 is a binding site for ATP. The segment at 591–629 is disordered; the sequence is KLADRVTDPTDDDDSDTDTETGTDVAETTNESHSESNMT. The segment covering 599–611 has biased composition (acidic residues); the sequence is PTDDDDSDTDTET. Polar residues predominate over residues 616 to 629; it reads AETTNESHSESNMT. The tRNA-binding domain occupies 643-741; it reads EFEELDLRVA…EDADPGTSIQ (99 aa).

This sequence belongs to the class-I aminoacyl-tRNA synthetase family. MetG type 1 subfamily. Homodimer. Requires Zn(2+) as cofactor.

The protein resides in the cytoplasm. The catalysed reaction is tRNA(Met) + L-methionine + ATP = L-methionyl-tRNA(Met) + AMP + diphosphate. Is required not only for elongation of protein synthesis but also for the initiation of all mRNA translation through initiator tRNA(fMet) aminoacylation. This chain is Methionine--tRNA ligase, found in Haloquadratum walsbyi (strain DSM 16790 / HBSQ001).